The sequence spans 887 residues: Alanine--tRNA ligase (887 aa).

Zn(2+)-binding residues include H564, H568, C676, and H680.

This sequence belongs to the class-II aminoacyl-tRNA synthetase family. It depends on Zn(2+) as a cofactor.

It localises to the cytoplasm. It catalyses the reaction tRNA(Ala) + L-alanine + ATP = L-alanyl-tRNA(Ala) + AMP + diphosphate. Catalyzes the attachment of alanine to tRNA(Ala) in a two-step reaction: alanine is first activated by ATP to form Ala-AMP and then transferred to the acceptor end of tRNA(Ala). Also edits incorrectly charged Ser-tRNA(Ala) and Gly-tRNA(Ala) via its editing domain. In Chelativorans sp. (strain BNC1), this protein is Alanine--tRNA ligase.